The following is a 465-amino-acid chain: Catalase cnsD (465 aa).

Residue H39 is part of the active site. Position 331 (Y331) interacts with heme.

The protein belongs to the catalase family. It depends on heme as a cofactor.

It participates in alkaloid biosynthesis. Functionally, catalase; part of the gene cluster that mediates the biosynthesis of communesins, a prominent class of indole alkaloids with great potential as pharmaceuticals. Communesins are biosynthesized by the coupling of tryptamine and aurantioclavine, two building blocks derived from L-tryptophan. The L-tryptophan decarboxylase cnsB converts L-tryptophan to tryptamine, whereas the tryptophan dimethylallyltransferase cnsF converts L-tryptophan to 4-dimethylallyl tryptophan which is further transformed to aurantioclavine by the aurantioclavine synthase cnsA, probably aided by the catalase cnsD. The cytochrome P450 monooxygenase cnsC catalyzes the heterodimeric coupling between the two different indole moieties, tryptamine and aurantioclavine, to construct vicinal quaternary stereocenters and yield the heptacyclic communesin scaffold. The O-methyltransferase cnsE then methylates the communesin scaffold to produce communesin K, the simplest characterized communesin that contains the heptacyclic core. The dioxygenase cnsJ converts communesin K into communesin I. Acylation to introduce the hexadienyl group at position N16 of communesin I by the acyltransferase cnsK leads to the production of communesin B. The hexadienyl group is produced by the highly reducing polyketide synthase cnsI, before being hydrolytically removed from cnsI by the serine hydrolase cnsH, converted into hexadienyl-CoA by the CoA ligase cnsG, and then transferred to communesin I by cnsK. Surprisingly, cnsK may also be a promiscuous acyltransferase that can tolerate a range of acyl groups, including acetyl-, propionyl-, and butyryl-CoA, which lead to communesins A, G and H respectively. The roles of the alpha-ketoglutarate-dependent dioxygenases cnsM and cnsP have still to be determined. The polypeptide is Catalase cnsD (Penicillium expansum (Blue mold rot fungus)).